The primary structure comprises 213 residues: THAP domain-containing protein 1 (213 aa).

The segment at 1-81 adopts a THAP-type zinc-finger fold; the sequence is MVQSCSAYGC…LKENAVPTIF (81 aa). The short motif at 134–137 is the HCFC1-binding motif (HBM) element; sequence DHNY. The involved in homodimer formation stretch occupies residues 139 to 185; it reads VEDTMHQRKRIHQLEQQVEKLRKKLKTAQQRCRRQERQLEKLKEVVH. Residues 139 to 190 adopt a coiled-coil conformation; the sequence is VEDTMHQRKRIHQLEQQVEKLRKKLKTAQQRCRRQERQLEKLKEVVHFQKEK.

This sequence belongs to the THAP1 family. As to quaternary structure, homodimer. Interacts with PAWR. Component of a THAP1/THAP3-HCFC1-OGT complex that contains, either THAP1 or THAP3, HCFC1 and OGT. Interacts with OGT. Interacts (via the HBM) with HCFC1 (via the Kelch-repeat domain); the interaction recruits HCFC1 to the RRM1 promoter. Highly expressed in heart, skeletal muscle, kidney and liver. Weaker expression in brain and placenta.

It is found in the nucleus. Its subcellular location is the nucleoplasm. The protein resides in the PML body. DNA-binding transcription regulator that regulates endothelial cell proliferation and G1/S cell-cycle progression. Specifically binds the 5'-[AT]NTNN[GT]GGCA[AGT]-3' core DNA sequence and acts by modulating expression of pRB-E2F cell-cycle target genes, including RRM1. Component of a THAP1/THAP3-HCFC1-OGT complex that is required for the regulation of the transcriptional activity of RRM1. May also have pro-apoptotic activity by potentiating both serum-withdrawal and TNF-induced apoptosis. This chain is THAP domain-containing protein 1 (THAP1), found in Homo sapiens (Human).